The primary structure comprises 482 residues: Aspartyl/glutamyl-tRNA(Asn/Gln) amidotransferase subunit B (482 aa).

It belongs to the GatB/GatE family. GatB subfamily. As to quaternary structure, heterotrimer of A, B and C subunits.

It carries out the reaction L-glutamyl-tRNA(Gln) + L-glutamine + ATP + H2O = L-glutaminyl-tRNA(Gln) + L-glutamate + ADP + phosphate + H(+). It catalyses the reaction L-aspartyl-tRNA(Asn) + L-glutamine + ATP + H2O = L-asparaginyl-tRNA(Asn) + L-glutamate + ADP + phosphate + 2 H(+). Its function is as follows. Allows the formation of correctly charged Asn-tRNA(Asn) or Gln-tRNA(Gln) through the transamidation of misacylated Asp-tRNA(Asn) or Glu-tRNA(Gln) in organisms which lack either or both of asparaginyl-tRNA or glutaminyl-tRNA synthetases. The reaction takes place in the presence of glutamine and ATP through an activated phospho-Asp-tRNA(Asn) or phospho-Glu-tRNA(Gln). The protein is Aspartyl/glutamyl-tRNA(Asn/Gln) amidotransferase subunit B of Azotobacter vinelandii (strain DJ / ATCC BAA-1303).